A 548-amino-acid chain; its full sequence is Glycosyl hydrolase family 109 protein 3 (548 aa).

A signal peptide spans 1-21 (MKLKKLLLSVLMLLSISGLQA). NAD(+) is bound by residues 71–72 (MR), aspartate 93, 141–144 (WNHH), 161–162 (EV), and asparagine 190. Tyrosine 219 provides a ligand contact to substrate. 240 to 244 (DNLHW) contacts NAD(+). Substrate contacts are provided by residues arginine 245, 257 to 260 (YATH), and tyrosine 335. Tyrosine 257 lines the NAD(+) pocket.

It belongs to the Gfo/Idh/MocA family. Glycosyl hydrolase 109 subfamily. It depends on NAD(+) as a cofactor.

In terms of biological role, glycosidase. The protein is Glycosyl hydrolase family 109 protein 3 of Phocaeicola vulgatus (strain ATCC 8482 / DSM 1447 / JCM 5826 / CCUG 4940 / NBRC 14291 / NCTC 11154) (Bacteroides vulgatus).